The following is a 381-amino-acid chain: Succinyl-diaminopimelate desuccinylase (381 aa).

His-68 is a Zn(2+) binding site. Residue Asp-70 is part of the active site. Asp-101 is a binding site for Zn(2+). The active-site Proton acceptor is Glu-135. Positions 136, 164, and 350 each coordinate Zn(2+).

It belongs to the peptidase M20A family. DapE subfamily. Homodimer. Zn(2+) serves as cofactor. Requires Co(2+) as cofactor.

It catalyses the reaction N-succinyl-(2S,6S)-2,6-diaminopimelate + H2O = (2S,6S)-2,6-diaminopimelate + succinate. It participates in amino-acid biosynthesis; L-lysine biosynthesis via DAP pathway; LL-2,6-diaminopimelate from (S)-tetrahydrodipicolinate (succinylase route): step 3/3. In terms of biological role, catalyzes the hydrolysis of N-succinyl-L,L-diaminopimelic acid (SDAP), forming succinate and LL-2,6-diaminopimelate (DAP), an intermediate involved in the bacterial biosynthesis of lysine and meso-diaminopimelic acid, an essential component of bacterial cell walls. In Neisseria gonorrhoeae (strain NCCP11945), this protein is Succinyl-diaminopimelate desuccinylase.